Here is a 296-residue protein sequence, read N- to C-terminus: Cobalamin trafficking protein CblD (296 aa).

The N-terminal 38 residues, 1 to 38 (MAHVLCNRARLVSYLPGFCSLVKRVINPRAFSTAGSSG), are a transit peptide targeting the mitochondrion. N6-acetyllysine is present on Lys-203.

In terms of assembly, heterodimer with MMACHC. Forms a multiprotein complex with MMACHC, MTR and MTRR.

The protein resides in the cytoplasm. It localises to the mitochondrion. Functionally, involved in cobalamin metabolism and trafficking. Plays a role in regulating the biosynthesis and the proportion of two coenzymes, methylcob(III)alamin (MeCbl) and 5'-deoxyadenosylcobalamin (AdoCbl). Promotes oxidation of cob(II)alamin bound to MMACHC. The processing of cobalamin in the cytosol occurs in a multiprotein complex composed of at least MMACHC, MMADHC, MTRR (methionine synthase reductase) and MTR (methionine synthase) which may contribute to shuttle safely and efficiently cobalamin towards MTR in order to produce methionine. The polypeptide is Cobalamin trafficking protein CblD (Mus musculus (Mouse)).